The chain runs to 388 residues: F-box protein At5g42460 (388 aa).

Residues 1-47 (MTIMSDLPRDLLAEILSRVPLTSLRAVRLTCKKWNDLSKDRSFLKKQ) enclose the F-box domain.

This Arabidopsis thaliana (Mouse-ear cress) protein is F-box protein At5g42460.